The chain runs to 121 residues: Large ribosomal subunit protein uL14 (121 aa).

The protein belongs to the universal ribosomal protein uL14 family. As to quaternary structure, part of the 50S ribosomal subunit. Forms a cluster with proteins L3 and L19. In the 70S ribosome, L14 and L19 interact and together make contacts with the 16S rRNA in bridges B5 and B8.

Its function is as follows. Binds to 23S rRNA. Forms part of two intersubunit bridges in the 70S ribosome. The sequence is that of Large ribosomal subunit protein uL14 from Mycoplasmopsis synoviae (strain 53) (Mycoplasma synoviae).